Reading from the N-terminus, the 134-residue chain is ATP synthase epsilon chain (134 aa).

This sequence belongs to the ATPase epsilon chain family. In terms of assembly, F-type ATPases have 2 components, CF(1) - the catalytic core - and CF(0) - the membrane proton channel. CF(1) has five subunits: alpha(3), beta(3), gamma(1), delta(1), epsilon(1). CF(0) has three main subunits: a, b and c.

The protein resides in the cell inner membrane. Functionally, produces ATP from ADP in the presence of a proton gradient across the membrane. This Rhodospirillum rubrum (strain ATCC 11170 / ATH 1.1.1 / DSM 467 / LMG 4362 / NCIMB 8255 / S1) protein is ATP synthase epsilon chain.